The chain runs to 142 residues: Small ribosomal subunit protein uS9c (142 aa).

Belongs to the universal ribosomal protein uS9 family.

It is found in the plastid. Its subcellular location is the chloroplast. This is Small ribosomal subunit protein uS9c (rps9) from Stigeoclonium helveticum (Green alga).